A 121-amino-acid polypeptide reads, in one-letter code: NLYQFGEMISKKTGTFGLFSYVYYGCYCGLGGKGKPLDATDRCCFVHDCCYGRVNGCNPKLSIYSYSFQNGDIVCGDEEDCLRDVCECDRVAAICFGENMNTYNKKYVLYSFKECNESDQC.

Disulfide bonds link C26-C115, C28-C44, C43-C95, C49-C121, C50-C88, C57-C81, and C75-C86. Ca(2+)-binding residues include Y27, G29, and G31. H47 is an active-site residue. Residue D48 participates in Ca(2+) binding. Residue D89 is part of the active site.

This sequence belongs to the phospholipase A2 family. Group II subfamily. D49 sub-subfamily. Requires Ca(2+) as cofactor. Expressed by the venom gland.

It is found in the secreted. The catalysed reaction is a 1,2-diacyl-sn-glycero-3-phosphocholine + H2O = a 1-acyl-sn-glycero-3-phosphocholine + a fatty acid + H(+). PLA2 catalyzes the calcium-dependent hydrolysis of the 2-acyl groups in 3-sn-phosphoglycerides. The sequence is that of Acidic phospholipase A2 PLA-2 from Eristicophis macmahoni (Leaf-nosed viper).